Reading from the N-terminus, the 244-residue chain is Carboxy-S-adenosyl-L-methionine synthase (244 aa).

Residues Tyr41, Gly66–Ser68, Asp91–Asn92, Asn134, and Arg201 contribute to the S-adenosyl-L-methionine site.

Belongs to the class I-like SAM-binding methyltransferase superfamily. Cx-SAM synthase family. As to quaternary structure, homodimer.

The enzyme catalyses prephenate + S-adenosyl-L-methionine = carboxy-S-adenosyl-L-methionine + 3-phenylpyruvate + H2O. Functionally, catalyzes the conversion of S-adenosyl-L-methionine (SAM) to carboxy-S-adenosyl-L-methionine (Cx-SAM). This Colwellia psychrerythraea (strain 34H / ATCC BAA-681) (Vibrio psychroerythus) protein is Carboxy-S-adenosyl-L-methionine synthase.